The sequence spans 175 residues: Dual-action ribosomal maturation protein DarP (175 aa).

It belongs to the DarP family.

The protein resides in the cytoplasm. Its function is as follows. Member of a network of 50S ribosomal subunit biogenesis factors which assembles along the 30S-50S interface, preventing incorrect 23S rRNA structures from forming. Promotes peptidyl transferase center (PTC) maturation. The protein is Dual-action ribosomal maturation protein DarP of Vibrio parahaemolyticus serotype O3:K6 (strain RIMD 2210633).